The sequence spans 33 residues: Alpha-amanitin proprotein (33 aa).

Residues 1–10 constitute a propeptide that is removed on maturation; that stretch reads MSDINATRLP. Ile-11 is modified ((3R,4R)-4,5-dihydroxyisoleucine; in form alpha-amanitin). Ile-11 bears the (3R,4S)-4-hydroxyisoleucine; in form gamma-amanitin mark. Positions 11-18 form a cross-link, cyclopeptide (Ile-Pro); it reads IWGIGCNP. The segment at residues 12–16 is a cross-link (2'-cysteinyl-6'-hydroxytryptophan sulfoxide (Trp-Cys)); that stretch reads WGIGC. At Pro-18 the chain carries 4-hydroxyproline. Positions 19–33 are excised as a propeptide; that stretch reads CVGDEVTALITRGEA.

Belongs to the MSDIN fungal toxin family. In terms of processing, processed by the macrocyclase-peptidase enzyme POPB to yield a toxic cyclic decapeptide. POPB first removes 10 residues from the N-terminus. Conformational trapping of the remaining peptide forces the enzyme to release this intermediate rather than proceed to macrocyclization. The enzyme rebinds the remaining peptide in a different conformation and catalyzes macrocyclization of the N-terminal 8 residues.

Major toxin belonging to the bicyclic octapeptides amatoxins that acts by binding non-competitively to RNA polymerase II and greatly slowing the elongation of transcripts from target promoters. This is Alpha-amanitin proprotein from Amanita pallidorosea.